A 200-amino-acid chain; its full sequence is Molybdenum cofactor guanylyltransferase (200 aa).

GTP contacts are provided by residues 10-12 (LAG), Lys23, Asn51, Asp69, and Asp99. Asp99 is a binding site for Mg(2+).

This sequence belongs to the MobA family. In terms of assembly, monomer. Requires Mg(2+) as cofactor.

The protein localises to the cytoplasm. It catalyses the reaction Mo-molybdopterin + GTP + H(+) = Mo-molybdopterin guanine dinucleotide + diphosphate. Transfers a GMP moiety from GTP to Mo-molybdopterin (Mo-MPT) cofactor (Moco or molybdenum cofactor) to form Mo-molybdopterin guanine dinucleotide (Mo-MGD) cofactor. This Shewanella pealeana (strain ATCC 700345 / ANG-SQ1) protein is Molybdenum cofactor guanylyltransferase.